The following is a 770-amino-acid chain: Amyloid-beta precursor protein (770 aa).

An N-terminal signal peptide occupies residues 1-17 (MLPSLALLLLAAWTVRA). The Extracellular portion of the chain corresponds to 18–701 (LEVPTDGNAG…AEDVGSNKGA (684 aa)). The tract at residues 28–123 (LLAEPQIAMF…PYRCLVGEFV (96 aa)) is GFLD subdomain. An E1 domain is found at 28–189 (LLAEPQIAMF…RGVEFVCCPL (162 aa)). Cystine bridges form between C38–C62, C73–C117, C98–C105, C133–C187, C144–C174, and C158–C186. 96 to 110 (NWCKRGRKQCKTHTH) contacts heparin. Residues 131–189 (DKCKFLHQERMDVCETHLHWHTVAKETCSEKSTNLHDYGMLLPCGIDKFRGVEFVCCPL) form a cuBD subdomain region. Residues 135–155 (FLHQERMDVCETHLHWHTVAK) are copper-binding. Residues H147, H151, and Y168 each coordinate Cu(2+). Residues 181 to 188 (GVEFVCCP) form a zinc-binding region. Zn(2+) contacts are provided by E183, C186, and C187. Acidic residues predominate over residues 196 to 207 (IDSADAEEDDSD). Residues 196-283 (IDSADAEEDD…TTTTTTTESV (88 aa)) form a disordered region. Residue S198 is modified to Phosphoserine; by CK2. S206 bears the Phosphoserine; by CK1 mark. Y217 and Y262 each carry sulfotyrosine. A compositionally biased stretch (acidic residues) spans 228–264 (VAEEEEVADVEEEEAEDDEDVEDGDEVEEEAEEPYEE). The segment covering 268–281 (RTTSIATTTTTTTE) has biased composition (low complexity). 3 disulfide bridges follow: C291–C341, C300–C324, and C316–C337. Positions 291 to 341 (CSEQAETGPCRAMISRWYFDVTEGKCAPFFYGGCGGNRNNFDTEEYCMAVC) constitute a BPTI/Kunitz inhibitor domain. Y336 is subject to Sulfotyrosine. The short motif at 344–365 (VSSQSLLKTTSEPLPQDPVKLP) is the OX-2 element. The E2 domain occupies 374–565 (AVDKYLETPG…EEIQDEVDEL (192 aa)). A heparin-binding region spans residues 391 to 423 (FQKAKERLEAKHRERMSQVMREWEEAERQAKNL). The residue at position 441 (S441) is a Phosphoserine. The interval 491–522 (FNMLKKYVRAEQKDRQHTLKHFEHVRMVDPKK) is heparin-binding. Y497 bears the Phosphotyrosine mark. The collagen-binding stretch occupies residues 523 to 540 (AAQIRSQVMTHLRVIYER). N-linked (GlcNAc...) asparagine glycosylation is found at N542 and N571. O-linked (Xyl...) (chondroitin sulfate) serine; in L-APP isoforms glycosylation is present at S656. Cu(2+) is bound by residues H677 and H685. 2 residues coordinate Zn(2+): H677 and H685. The segment at 695-722 (VGSNKGAIIGLMVGGVVIATVIVITLVM) is interaction with PSEN1. Residues 702 to 722 (IIGLMVGGVVIATVIVITLVM) form a helical membrane-spanning segment. The Cytoplasmic segment spans residues 723–770 (LKKKQYTSIHHGVVEVDAAVTPEERHLSKMQQNGYENPTYKFFEQMQN). The short motif at 724 to 734 (KKKQYTSIHHG) is the Basolateral sorting signal element. T729 is modified (phosphothreonine). S730 bears the Phosphoserine; by APP-kinase I mark. The interaction with G(o)-alpha stretch occupies residues 732–751 (HHGVVEVDAAVTPEERHLSK). Position 743 is a phosphothreonine; by CDK5 and MAPK10 (T743). The segment at 756–770 (GYENPTYKFFEQMQN) is required for the interaction with KIF5B and for anterograde transport in axons. Y757 is modified (phosphotyrosine; by ABL1). The YENPXY motif; contains endocytosis signal motif lies at 757 to 762 (YENPTY). K763 participates in a covalent cross-link: Glycyl lysine isopeptide (Lys-Gly) (interchain with G-Cter in ubiquitin).

Belongs to the APP family. In terms of assembly, binds, via its C-terminus, to the PID domain of several cytoplasmic proteins, including APBB family members, the APBA family, MAPK8IP1, SHC1 and NUMB and DAB1. Binding to DAB1 inhibits its serine phosphorylation. Interacts (via NPXY motif) with DAB2 (via PID domain); the interaction is impaired by tyrosine phosphorylation of the NPXY motif. Also interacts with GPCR-like protein BPP, APPBP1, IB1, KNS2 (via its TPR domains), APPBP2 (via BaSS) and DDB1. In vitro, it binds MAPT via the MT-binding domains. Associates with microtubules in the presence of ATP and in a kinesin-dependent manner. Interacts, through a C-terminal domain, with GNAO1. Amyloid-beta protein 42 binds CHRNA7 in hippocampal neurons. Amyloid-beta associates with HADH2. Interacts with CPEB1, ANKS1B and AGER. Interacts with ITM2B. Interacts with ITM2C. Interacts with IDE. Can form homodimers; dimerization is enhanced in the presence of Cu(2+) ions. Can form homodimers; this is promoted by heparin binding. Amyloid-beta protein 40 interacts with S100A9. CTF-alpha product of APP interacts with GSAP. Isoform APP695 interacts with SORL1 (via N-terminal ectodomain); this interaction retains APP in the trans-Golgi network and reduces processing into soluble APP-alpha and amyloid-beta peptides. The C99 fragment also interacts with SORL1. Isoform APP751 interacts with SORL1. Isoform APP770 interacts with SORL1. Interacts with PLD3. Interacts with VDAC1. Interacts with NSG1; could regulate APP processing. Amyloid-beta protein 42 interacts with FPR2. Interacts with SYT7. Interacts (via transmembrane region) with PSEN1; the interaction is direct. Interacts with LRRK2. Interacts (via cytoplasmic domain) with KIF5B. Interacts (via C-terminus) with APBB2/FE65L1 (via C-terminus). Interacts (via intracellular domain) with APBB3. Proteolytically processed under normal cellular conditions. Cleavage either by alpha-secretase, beta-secretase or theta-secretase leads to generation and extracellular release of soluble APP peptides, S-APP-alpha and S-APP-beta, and the retention of corresponding membrane-anchored C-terminal fragments, C80, C83 and C99. Subsequent processing of C80 and C83 by gamma-secretase yields P3 peptides. This is the major secretory pathway and is non-amyloidogenic. Alternatively, presenilin/nicastrin-mediated gamma-secretase processing of C99 releases the amyloid-beta proteins, amyloid-beta protein 40 and amyloid-beta protein 42, major components of amyloid plaques, and the cytotoxic C-terminal fragments, gamma-CTF(50), gamma-CTF(57) and gamma-CTF(59). PSEN1 cleavage is more efficient with C83 than with C99 as substrate (in vitro). Amyloid-beta protein 40 and Amyloid-beta protein 42 are cleaved by ACE. Many other minor amyloid-beta peptides, amyloid-beta 1-X peptides, are found in cerebral spinal fluid (CSF) including the amyloid-beta X-15 peptides, produced from the cleavage by alpha-secretase. In terms of processing, proteolytically cleaved by caspases during neuronal apoptosis. Cleavage at Asp-739 by either caspase-3, -8 or -9 results in the production of the neurotoxic C31 peptide and the increased production of amyloid-beta peptides. Post-translationally, N-glycosylated. O-glycosylated. O-linkage of chondroitin sulfate to the L-APP isoforms produces the APP proteoglycan core proteins, the appicans. The chondroitin sulfate chain of appicans contains 4-O-sulfated galactose in the linkage region and chondroitin sulfate E in the repeated disaccharide region. In terms of processing, phosphorylation in the C-terminal on tyrosine, threonine and serine residues is neuron-specific. Phosphorylation can affect APP processing, neuronal differentiation and interaction with other proteins. Phosphorylated on Thr-743 in neuronal cells by Cdc5 kinase and Mapk10, in dividing cells by Cdc2 kinase in a cell-cycle dependent manner with maximal levels at the G2/M phase and, in vitro, by GSK-3-beta. The Thr-743 phosphorylated form causes a conformational change which reduces binding of Fe65 family members. In dopaminergic (DA) neurons, phosphorylation on Thr-743 by LRKK2 promotes the production and the nuclear translocation of the APP intracellular domain (AICD) which induces DA neuron apoptosis. Phosphorylation on Tyr-757 is required for SHC binding. Phosphorylated in the extracellular domain by casein kinases on both soluble and membrane-bound APP. This phosphorylation is inhibited by heparin. Post-translationally, extracellular binding and reduction of copper, results in a corresponding oxidation of Cys-144 and Cys-158, and the formation of a disulfide bond. Trophic-factor deprivation triggers the cleavage of surface APP by beta-secretase to release sAPP-beta which is further cleaved to release an N-terminal fragment of APP (N-APP). In terms of processing, amyloid-beta peptides are degraded by IDE. Post-translationally, sulfated on tyrosine residues. In terms of tissue distribution, expressed in the brain. In the brain, non-L-APP isoforms are expressed in neurons, isoform APP695 being the predominant form. In astrocytes and microglial cells, almost 50% is L-isoform (appican).

The protein resides in the cell membrane. Its subcellular location is the membrane. It localises to the perikaryon. The protein localises to the cell projection. It is found in the growth cone. The protein resides in the clathrin-coated pit. Its subcellular location is the early endosome. It localises to the cytoplasmic vesicle. The protein localises to the endoplasmic reticulum. It is found in the golgi apparatus. The protein resides in the cell surface. Its subcellular location is the nucleus. It localises to the cytoplasm. The protein localises to the secreted. In terms of biological role, functions as a cell surface receptor and performs physiological functions on the surface of neurons relevant to neurite growth, neuronal adhesion and axonogenesis. Interaction between APP molecules on neighboring cells promotes synaptogenesis. Involved in cell mobility and transcription regulation through protein-protein interactions. Can promote transcription activation through binding to APBB1-KAT5 and inhibit Notch signaling through interaction with Numb. Couples to apoptosis-inducing pathways such as those mediated by G(o) and JIP. Inhibits G(o)-alpha ATPase activity. Acts as a kinesin I membrane receptor, mediating the axonal transport of beta-secretase and presenilin 1. By acting as a kinesin I membrane receptor, plays a role in axonal anterograde transport of cargo towards synapses in axons. May be involved in copper homeostasis/oxidative stress through copper ion reduction. Can regulate neurite outgrowth through binding to components of the extracellular matrix such as heparin and collagen I and IV. The splice isoforms that contain the BPTI domain possess protease inhibitor activity. Induces a AGER-dependent pathway that involves activation of p38 MAPK, resulting in internalization of amyloid-beta peptide and leading to mitochondrial dysfunction in cultured mitochondrial dysfunction in cultured cortical neurons. Provides Cu(2+) ions for GPC1 which are required for release of nitric oxide (NO) and subsequent degradation of the heparan sulfate chains on GPC1. Its function is as follows. Amyloid-beta peptides are lipophilic metal chelators with metal-reducing activity. Binds transient metals such as copper, zinc and iron. Rat and mouse amyloid-beta peptides bind only weakly transient metals and have little reducing activity due to substitutions of transient metal chelating residues. Amyloid-beta protein 42 may activate mononuclear phagocytes in the brain and elicits inflammatory responses. Promotes both tau aggregation and TPK II-mediated phosphorylation. Also binds GPC1 in lipid rafts. Appicans elicit adhesion of neural cells to the extracellular matrix and may regulate neurite outgrowth in the brain. Functionally, the gamma-CTF peptides as well as the caspase-cleaved peptides, including C31, are potent enhancers of neuronal apoptosis. In Rattus norvegicus (Rat), this protein is Amyloid-beta precursor protein.